A 169-amino-acid chain; its full sequence is Cytochrome c oxidase subunit 4 isoform 1, mitochondrial (169 aa).

The transit peptide at 1 to 22 (MLATRALSLIGKRAISTSVCLR) directs the protein to the mitochondrion. Over 23–98 (AHGSVVKSED…SFAEMNKGTN (76 aa)) the chain is Mitochondrial matrix. Lys29 carries the N6-acetyllysine; alternate modification. Residue Lys29 is modified to N6-succinyllysine; alternate. An N6-acetyllysine modification is found at Lys53. Ser56 and Ser58 each carry phosphoserine. Position 60 is an N6-acetyllysine; alternate (Lys60). Lys60 carries the post-translational modification N6-succinyllysine; alternate. Residue Lys67 is modified to N6-acetyllysine. A helical transmembrane segment spans residues 99–124 (EWKTVVGLAMFFIGFTALVLIWEKSY). Over 125–169 (VYGPIPHTFDRDWVAMQTKRMLDMKVNPIQGFSAKWDYNKNEWKK) the chain is Mitochondrial intermembrane.

This sequence belongs to the cytochrome c oxidase IV family. In terms of assembly, component of the cytochrome c oxidase (complex IV, CIV), a multisubunit enzyme composed of 14 subunits. The complex is composed of a catalytic core of 3 subunits MT-CO1, MT-CO2 and MT-CO3, encoded in the mitochondrial DNA, and 11 supernumerary subunits COX4I, COX5A, COX5B, COX6A, COX6B, COX6C, COX7A, COX7B, COX7C, COX8 and NDUFA4, which are encoded in the nuclear genome. The complex exists as a monomer or a dimer and forms supercomplexes (SCs) in the inner mitochondrial membrane with NADH-ubiquinone oxidoreductase (complex I, CI) and ubiquinol-cytochrome c oxidoreductase (cytochrome b-c1 complex, complex III, CIII), resulting in different assemblies (supercomplex SCI(1)III(2)IV(1) and megacomplex MCI(2)III(2)IV(2)). Interacts with PHB2; the interaction decreases in absence of SPHK2. Interacts with AFG1L. Interacts with ABCB7; this interaction allows the regulation of cellular iron homeostasis and cellular reactive oxygen species (ROS) levels in cardiomyocytes. Interacts with FLVCR2; this interaction occurs in the absence of heme and is disrupted upon heme binding. Interacts with IRGC.

The protein resides in the mitochondrion inner membrane. It participates in energy metabolism; oxidative phosphorylation. In terms of biological role, component of the cytochrome c oxidase, the last enzyme in the mitochondrial electron transport chain which drives oxidative phosphorylation. The respiratory chain contains 3 multisubunit complexes succinate dehydrogenase (complex II, CII), ubiquinol-cytochrome c oxidoreductase (cytochrome b-c1 complex, complex III, CIII) and cytochrome c oxidase (complex IV, CIV), that cooperate to transfer electrons derived from NADH and succinate to molecular oxygen, creating an electrochemical gradient over the inner membrane that drives transmembrane transport and the ATP synthase. Cytochrome c oxidase is the component of the respiratory chain that catalyzes the reduction of oxygen to water. Electrons originating from reduced cytochrome c in the intermembrane space (IMS) are transferred via the dinuclear copper A center (CU(A)) of subunit 2 and heme A of subunit 1 to the active site in subunit 1, a binuclear center (BNC) formed by heme A3 and copper B (CU(B)). The BNC reduces molecular oxygen to 2 water molecules using 4 electrons from cytochrome c in the IMS and 4 protons from the mitochondrial matrix. This is Cytochrome c oxidase subunit 4 isoform 1, mitochondrial (Cox4i1) from Rattus norvegicus (Rat).